A 480-amino-acid chain; its full sequence is Ciliated left-right organizer protein containing ZP-N domains homolog (480 aa).

The N-terminal stretch at 1–23 is a signal peptide; sequence MKNQHNTFWVLCLLFVMFDETFS.

In terms of tissue distribution, expressed specifically by cells of the ciliated left-right organizer.

It localises to the secreted. This Xenopus tropicalis (Western clawed frog) protein is Ciliated left-right organizer protein containing ZP-N domains homolog.